Consider the following 317-residue polypeptide: Transaldolase (317 aa).

The active-site Schiff-base intermediate with substrate is Lys-132.

It belongs to the transaldolase family. Type 1 subfamily. In terms of assembly, homodimer.

It localises to the cytoplasm. The catalysed reaction is D-sedoheptulose 7-phosphate + D-glyceraldehyde 3-phosphate = D-erythrose 4-phosphate + beta-D-fructose 6-phosphate. It participates in carbohydrate degradation; pentose phosphate pathway; D-glyceraldehyde 3-phosphate and beta-D-fructose 6-phosphate from D-ribose 5-phosphate and D-xylulose 5-phosphate (non-oxidative stage): step 2/3. In terms of biological role, transaldolase is important for the balance of metabolites in the pentose-phosphate pathway. In Yersinia pseudotuberculosis serotype O:1b (strain IP 31758), this protein is Transaldolase.